The following is a 994-amino-acid chain: Receptor-like protein 6 (994 aa).

The signal sequence occupies residues methionine 1 to cysteine 25. Residues asparagine 26–glutamate 946 lie on the Extracellular side of the membrane. Residues asparagine 116, asparagine 134, and asparagine 154 are each glycosylated (N-linked (GlcNAc...) asparagine). LRR repeat units lie at residues leucine 122–lysine 146, methionine 148–leucine 171, leucine 174–histidine 199, phenylalanine 205–tyrosine 228, tryptophan 230–isoleucine 253, proline 254–asparagine 278, leucine 280–leucine 301, lysine 302–leucine 325, serine 326–leucine 349, lysine 350–leucine 373, glutamine 375–leucine 397, serine 398–isoleucine 421, serine 423–leucine 445, leucine 446–serine 471, serine 477–serine 497, serine 498–glutamine 520, arginine 521–leucine 544, glutamate 546–glycine 569, and lysine 571–tyrosine 595. Asparagine 277 and asparagine 287 each carry an N-linked (GlcNAc...) asparagine glycan. Asparagine 420, asparagine 435, and asparagine 442 each carry an N-linked (GlcNAc...) asparagine glycan. Residue asparagine 489 is glycosylated (N-linked (GlcNAc...) asparagine). N-linked (GlcNAc...) asparagine glycosylation is found at asparagine 522, asparagine 554, and asparagine 561. Residues leucine 597–glycine 613 form an LRR 20; degenerate repeat. The N-linked (GlcNAc...) asparagine glycan is linked to asparagine 602. LRR repeat units lie at residues leucine 614–alanine 637, methionine 639–alanine 663, valine 665–cysteine 687, alanine 689–serine 710, leucine 711–glycine 737, proline 739–asparagine 762, leucine 803–leucine 827, lysine 828–leucine 851, threonine 852–leucine 875, and serine 877–arginine 900. Residue asparagine 649 is glycosylated (N-linked (GlcNAc...) asparagine). Asparagine 701 is a glycosylation site (N-linked (GlcNAc...) asparagine). Asparagine 762 carries an N-linked (GlcNAc...) asparagine glycan. Asparagine 834 and asparagine 850 each carry an N-linked (GlcNAc...) asparagine glycan. N-linked (GlcNAc...) asparagine glycosylation is found at asparagine 882 and asparagine 902. Residues leucine 947–methionine 967 traverse the membrane as a helical segment. Residues glycine 968–arginine 994 lie on the Cytoplasmic side of the membrane.

It belongs to the RLP family.

The protein resides in the cell membrane. This chain is Receptor-like protein 6, found in Arabidopsis thaliana (Mouse-ear cress).